Consider the following 82-residue polypeptide: NAD(P)H-quinone oxidoreductase subunit O (82 aa).

Belongs to the complex I NdhO subunit family. NDH-1 can be composed of about 15 different subunits; different subcomplexes with different compositions have been identified which probably have different functions.

It is found in the cellular thylakoid membrane. The enzyme catalyses a plastoquinone + NADH + (n+1) H(+)(in) = a plastoquinol + NAD(+) + n H(+)(out). It carries out the reaction a plastoquinone + NADPH + (n+1) H(+)(in) = a plastoquinol + NADP(+) + n H(+)(out). Functionally, NDH-1 shuttles electrons from an unknown electron donor, via FMN and iron-sulfur (Fe-S) centers, to quinones in the respiratory and/or the photosynthetic chain. The immediate electron acceptor for the enzyme in this species is believed to be plastoquinone. Couples the redox reaction to proton translocation, and thus conserves the redox energy in a proton gradient. Cyanobacterial NDH-1 also plays a role in inorganic carbon-concentration. This is NAD(P)H-quinone oxidoreductase subunit O from Prochlorococcus marinus (strain MIT 9211).